The following is a 528-amino-acid chain: Putative ABC transporter ATP-binding protein MA_1418 (528 aa).

ABC transporter domains are found at residues 2-242 (IELR…TNLT) and 262-494 (ISVK…SDYK). ATP is bound by residues 36–43 (GHSAAGKT) and 294–301 (GENGSGKT).

This sequence belongs to the ABC transporter superfamily.

Its subcellular location is the cell membrane. Its function is as follows. Probably part of an ABC transporter complex. Responsible for energy coupling to the transport system. The sequence is that of Putative ABC transporter ATP-binding protein MA_1418 from Methanosarcina acetivorans (strain ATCC 35395 / DSM 2834 / JCM 12185 / C2A).